A 316-amino-acid polypeptide reads, in one-letter code: Coiled-coil domain-containing protein 42 (316 aa).

Coiled coils occupy residues serine 39 to leucine 146 and leucine 178 to arginine 232.

This sequence belongs to the CFAP73 family. As to quaternary structure, interacts with ODF1 and ODF2. Interacts with CCDC38. Interacts with CCDC146. Interacts with CFAP53.

It is found in the cytoplasm. The protein localises to the perinuclear region. Its subcellular location is the cytoskeleton. It localises to the cell projection. The protein resides in the cilium. It is found in the flagellum. The protein localises to the microtubule organizing center. Its subcellular location is the centrosome. In terms of biological role, essential for male fertility. Required for sperm development. The polypeptide is Coiled-coil domain-containing protein 42 (Homo sapiens (Human)).